We begin with the raw amino-acid sequence, 179 residues long: Putative ankyrin repeat protein RF_0922 (179 aa).

ANK repeat units follow at residues 5-34 (KGCT…EQAI), 40-72 (NGST…INHV), 75-104 (NGNT…SQAI), 110-139 (NGDT…EQAI), and 145-174 (NGNT…KQAI).

The protein is Putative ankyrin repeat protein RF_0922 of Rickettsia felis (strain ATCC VR-1525 / URRWXCal2) (Rickettsia azadi).